A 397-amino-acid polypeptide reads, in one-letter code: Staphylopine export protein (397 aa).

Transmembrane regions (helical) follow at residues 12 to 32, 38 to 58, 77 to 97, 102 to 122, 134 to 154, 158 to 178, 217 to 237, 239 to 259, 285 to 305, 309 to 329, 337 to 357, and 363 to 383; these read LYILTLMFFSANAILNVFIPL, GATNTVIGIVMGAYMLTAMVF, IILIINAIALIIYGFTGLEGY, VMQGVCTAFFSMSLQLGIIDA, LYSLFSTIPNLIGPLVAVGIW, NISLFAIVIIFIALTTTFFGY, GIIMIVASIVFGAVSTFVPLY, VSLGFANAGIFLTIQAIAVVA, LLVIASFVVAFGPQVGAIIFY, ILIGMTQAMVYPTLTSYLSFV, MLLGLFIACADLGISLGGALM, and LVGFKWMYLICGMLVIVIMIM.

It belongs to the major facilitator superfamily.

The protein localises to the cell membrane. Functionally, involved in the export of the metallophore staphylopine. This Staphylococcus aureus (strain Mu50 / ATCC 700699) protein is Staphylopine export protein.